Consider the following 215-residue polypeptide: Sodium channel regulatory subunit beta-2 (215 aa).

The first 29 residues, 1–29 (MHRDAWLPRPAFSLTGLSLFFSLVPPGRS), serve as a signal peptide directing secretion. Residues 30 to 157 (MEVTVPATLN…XEEPPERDST (128 aa)) are Extracellular-facing. The Ig-like C2-type domain maps to 32–154 (VTVPATLNVL…QVLXEEPPER (123 aa)). Residues Asn-42, Asn-66, and Asn-74 are each glycosylated (N-linked (GlcNAc...) asparagine). 2 cysteine pairs are disulfide-bonded: Cys-50/Cys-127 and Cys-72/Cys-75. A helical transmembrane segment spans residues 158–179 (VAVIVGASVGGFLAVVILVLMV). Residues 180-215 (VKCVRRKKEQKLSTDDLKTEEEGKTDGEGNPDDGAK) are Cytoplasmic-facing. Residues 187-215 (KEQKLSTDDLKTEEEGKTDGEGNPDDGAK) are disordered. Basic and acidic residues predominate over residues 189 to 215 (QKLSTDDLKTEEEGKTDGEGNPDDGAK). Residue Ser-192 is modified to Phosphoserine. At Thr-204 the chain carries Phosphothreonine.

The protein belongs to the sodium channel auxiliary subunit SCN2B (TC 8.A.17) family. As to quaternary structure, a voltage-gated sodium (Nav) channel consists of an ion-conducting pore-forming alpha subunit functional on its own that is regulated by one or more beta subunits. The beta subunit SCN2B is disulfide-linked to the pore-forming alpha subunit. Interacts with SCN1A; regulatory subunit of SCN1A/Nav1.1. Interacts with SCN2A; regulatory subunit of SCN2A/Nav1.2. Interacts with SCN3A; regulatory subunit of SCN3A/Nav1.3. Interacts with SCN5A; regulatory subunit of SCN5A/Nav1.5. Interacts with SCN8A; regulatory subunit of SCN8A/Nav1.6. Interacts with SCN9A; regulatory subunit of SCN9A/Nav1.7. Interacts with SCN10A; regulatory subunit of SCN10A/Nav1.8. Interacts with TNR; may play a crucial role in clustering and regulation of activity of SCN2B-containing Nav channels at nodes of Ranvier.

Its subcellular location is the cell membrane. It is found in the cell projection. The protein localises to the axon. In terms of biological role, regulatory subunit of multiple voltage-gated sodium (Nav) channels, that directly mediate the depolarization of excitable membranes. Navs, also called VGSCs (voltage-gated sodium channels) or VDSCs (voltage-dependent sodium channels), operate by switching between closed and open conformations depending on the voltage difference across the membrane. In the open conformation they allow Na(+) ions to selectively pass through the pore, along their electrochemical gradient. The influx of Na+ ions provokes membrane depolarization, initiating the propagation of electrical signals throughout cells and tissues. The accessory beta subunits participate in localization and functional modulation of the Nav channels. Modulates the activity of SCN1A/Nav1.1, SCN2A/Nav1.2, SCN2A/Nav1.3, SCN5A/Nav1.5, SCN8A/Nav1.6, SCN9A/Nav1.7 and SCN10A/Nav1.8. In Canis lupus familiaris (Dog), this protein is Sodium channel regulatory subunit beta-2.